The following is a 267-amino-acid chain: Cytokinesis defective protein 7 (267 aa).

A disordered region spans residues 244–267 (RNQADQSILPPSGDQQHHRSELHA). A compositionally biased stretch (basic and acidic residues) spans 258–267 (QQHHRSELHA).

The sequence is that of Cytokinesis defective protein 7 from Caenorhabditis elegans.